We begin with the raw amino-acid sequence, 423 residues long: COP9 signalosome complex subunit 3 (423 aa).

Ala-2 is modified (N-acetylalanine). The 169-residue stretch at Asn-197–Glu-365 folds into the PCI domain. The tract at residues Gln-402 to Ser-423 is disordered. Residues Ser-407, Ser-410, and Ser-423 each carry the phosphoserine modification.

Belongs to the CSN3 family. As to quaternary structure, component of the CSN complex, composed of COPS1/GPS1, COPS2, COPS3, COPS4, COPS5, COPS6, COPS7 (COPS7A or COPS7B), COPS8 and COPS9. In the complex, it probably interacts directly with COPS1, COPS4, COPS8 and COPS9. Interacts with CK2 and PKD. Interacts with the translation initiation factor EIF3S6 and IKBKG. Interacts with ERCC6.

Its subcellular location is the cytoplasm. It is found in the nucleus. Functionally, component of the COP9 signalosome complex (CSN), a complex involved in various cellular and developmental processes. The CSN complex is an essential regulator of the ubiquitin (Ubl) conjugation pathway by mediating the deneddylation of the cullin subunits of SCF-type E3 ligase complexes, leading to decrease the Ubl ligase activity of SCF-type complexes such as SCF, CSA or DDB2. The complex is also involved in phosphorylation of p53/TP53, c-jun/JUN, IkappaBalpha/NFKBIA, ITPK1 and IRF8/ICSBP, possibly via its association with CK2 and PKD kinases. CSN-dependent phosphorylation of TP53 and JUN promotes and protects degradation by the Ubl system, respectively. Essential to maintain the survival of epiblast cells and thus the development of the postimplantation embryo. The polypeptide is COP9 signalosome complex subunit 3 (COPS3) (Bos taurus (Bovine)).